The chain runs to 251 residues: uncharacterized protein (251 aa).

This is an uncharacterized protein from Methanothermus fervidus.